The following is a 131-amino-acid chain: Thrombocorticin (131 aa).

Cys3 and Cys111 are oxidised to a cystine. Positions 28–60 are disordered; the sequence is RNESVEVKDSNGNTVSRGSGSSSSGGTFTVINM. Positions 37 to 54 are enriched in low complexity; that stretch reads SNGNTVSRGSGSSSSGGT. Residues 117-131 carry the Pseudodomain-swapping motif motif; the sequence is DFNDVFVLITGLVRG.

Its function is as follows. Binds to fucose and mannose in a calcium-dependent manner (in vitro). Acts as an agonist for human thrombopoietin receptor MPL (in vitro). Binding of sugar-moieties may promote the interaction with human MPL on the cell surface (in vitro). Catalyzes MPL dimerization and activation, and modulates internalization of the receptor (in vitro). Exhibits proliferation activity in murine recombinant Ba/F3 cells expressing human MPL (Ba/F3-huMPL) (in vitro). Induces phosphorylation of STAT5 in recombinant Ba/F3-huMPL cells, possibly by stimulating MPL on the cell surface to transduce signals via Jak/STAT signaling pathway (in vitro). Does not aggregate rabbit erythrocytes, indicating absent lectin-like agglutination activity (in vitro). The chain is Thrombocorticin from Corticium sp. (Marine sponge).